The following is a 265-amino-acid chain: MREITIGQYIPGNSVIHRLDPRTKILITTAFMVLLFVIDDFTGYAFPAVFIIAVSILSGISLKYMMRGLRPLVIIIVLTFVLNLFMIKGRVIYEIGPLDITYEGLYQGTFMVLRLIMLIVGTSLLTLTTSPIALTDGIESLLKPFRRVGVPAHELAMMMTIALRFIPTLMEETDKIMKAQMARGADFASGNVVQRARSLVPLLVPLFINAFRRADDLAMAMESRCYRGGENRTRMKQLRMTSADLAAFIATGLLAVGSIMSRFIW.

The next 5 membrane-spanning stretches (helical) occupy residues 32 to 52 (MVLL…VFII), 72 to 92 (LVII…GRVI), 115 to 135 (LIML…IALT), 150 to 170 (VPAH…PTLM), and 245 to 265 (LAAF…RFIW).

The protein belongs to the energy-coupling factor EcfT family. Forms a stable energy-coupling factor (ECF) transporter complex composed of 2 membrane-embedded substrate-binding proteins (S component), 2 ATP-binding proteins (A component) and 2 transmembrane proteins (T component). May be able to interact with more than 1 S component at a time.

The protein localises to the cell membrane. Transmembrane (T) component of an energy-coupling factor (ECF) ABC-transporter complex. Unlike classic ABC transporters this ECF transporter provides the energy necessary to transport a number of different substrates. The protein is Energy-coupling factor transporter transmembrane protein EcfT of Thermosediminibacter oceani (strain ATCC BAA-1034 / DSM 16646 / JW/IW-1228P).